The sequence spans 703 residues: Ion-translocating oxidoreductase complex subunit C (703 aa).

4Fe-4S ferredoxin-type domains follow at residues 369–398 (YDPQATEQACIRCSACSDACPVHLMPQQMY) and 408–437 (KSNQYQLMDCIECGLCAYVCPSHIPLIQYF). The [4Fe-4S] cluster site is built by Cys-378, Cys-381, Cys-384, Cys-388, Cys-417, Cys-420, Cys-423, and Cys-427. Disordered regions lie at residues 467 to 542 (RLER…PDNS) and 555 to 680 (RQQT…PKKA). Residues 485-497 (ARREELAANKGED) show a composition bias toward basic and acidic residues. Residues 559 to 577 (NGNSPVSSASNSDSATISA) show a composition bias toward low complexity. Over residues 578-592 (DNTHSTPKTAQNQTA) the composition is skewed to polar residues. Low complexity-rich tracts occupy residues 598-629 (AAVAVAIARAKAKKAAQTTTGETVTENVTEKT) and 641-669 (AAVAAAIARAKAKKAAQATTGETATEKTA).

It belongs to the 4Fe4S bacterial-type ferredoxin family. RnfC subfamily. As to quaternary structure, the complex is composed of six subunits: RnfA, RnfB, RnfC, RnfD, RnfE and RnfG. Requires [4Fe-4S] cluster as cofactor.

Its subcellular location is the cell inner membrane. Functionally, part of a membrane-bound complex that couples electron transfer with translocation of ions across the membrane. This is Ion-translocating oxidoreductase complex subunit C from Actinobacillus succinogenes (strain ATCC 55618 / DSM 22257 / CCUG 43843 / 130Z).